The following is a 251-amino-acid chain: Blue-light absorbing proteorhodopsin (251 aa).

The first 18 residues, 1–18 (MGKLLLILGSAIALPSFA), serve as a signal peptide directing secretion. The next 7 helical transmembrane spans lie at 30-50 (VGVSFWLVTAGMLAATVFFFV), 65-85 (VSGLITGIAFWHYLYMRGVWI), 97-117 (IDWLLTVPLQVVEFYLILAAC), 120-140 (VAASLFKKLLAGSLVMLGAGF), 144-164 (AGLAPVLPAFIIGMAGWLYMI), 190-210 (MMMIIVVGWAIYPAGYAAGYL), and 223-243 (LIYNLADFVNKILFGLIIWNV). At lysine 233 the chain carries N6-(retinylidene)lysine.

It belongs to the archaeal/bacterial/fungal opsin family. Contains one covalently linked retinal chromophore.

It localises to the cell membrane. Functionally, light-driven proton pump. May have a regulatory rather than energy harvesting function, based on light-induced opening of proton channels, to modulate cell physiology depending on light intensity variations. Could be, therefore, a sensory rhodopsin, potentially associated with a transducer component. This is Blue-light absorbing proteorhodopsin from Gamma-proteobacterium Hot 75m4.